We begin with the raw amino-acid sequence, 412 residues long: AA9 family lytic polysaccharide monooxygenase A (412 aa).

A signal peptide spans 1-20 (MKTTTYSLLALAAASKLASA). Residues His-21 and His-103 each coordinate Cu(2+). Cys-63 and Cys-186 are disulfide-bonded. N-linked (GlcNAc...) asparagine glycosylation is present at Asn-151. O2 is bound at residue His-172. A Cu(2+)-binding site is contributed by Tyr-183. 2 N-linked (GlcNAc...) asparagine glycosylation sites follow: Asn-334 and Asn-385. The CBM1 domain maps to 373-409 (GVAKMYERCGGINHTGPTTCESGSVCKKWNPYYYQCV).

Belongs to the polysaccharide monooxygenase AA9 family. Requires Cu(2+) as cofactor.

The protein localises to the secreted. It carries out the reaction [(1-&gt;4)-beta-D-glucosyl]n+m + reduced acceptor + O2 = 4-dehydro-beta-D-glucosyl-[(1-&gt;4)-beta-D-glucosyl]n-1 + [(1-&gt;4)-beta-D-glucosyl]m + acceptor + H2O.. In terms of biological role, lytic polysaccharide monooxygenase (LPMO) that depolymerizes crystalline and amorphous polysaccharides via the oxidation of scissile alpha- or beta-(1-4)-glycosidic bonds, yielding C4 oxidation products. Catalysis by LPMOs requires the reduction of the active-site copper from Cu(II) to Cu(I) by a reducing agent and H(2)O(2) or O(2) as a cosubstrate. The protein is AA9 family lytic polysaccharide monooxygenase A (eglD) of Aspergillus niger (strain ATCC MYA-4892 / CBS 513.88 / FGSC A1513).